A 226-amino-acid chain; its full sequence is Large ribosomal subunit protein uL3 (226 aa).

A disordered region spans residues 135-158 (MSSQRASHGNSRSHNVPGSIGMAQ). A compositionally biased stretch (polar residues) spans 137–150 (SQRASHGNSRSHNV). Gln158 carries the post-translational modification N5-methylglutamine.

Belongs to the universal ribosomal protein uL3 family. In terms of assembly, part of the 50S ribosomal subunit. Forms a cluster with proteins L14 and L19. In terms of processing, methylated by PrmB.

Its function is as follows. One of the primary rRNA binding proteins, it binds directly near the 3'-end of the 23S rRNA, where it nucleates assembly of the 50S subunit. The chain is Large ribosomal subunit protein uL3 from Polaromonas naphthalenivorans (strain CJ2).